Here is a 185-residue protein sequence, read N- to C-terminus: Ribose 1,5-bisphosphate phosphokinase PhnN (185 aa).

Position 10–17 (10–17 (GPSGSGKD)) interacts with ATP.

It belongs to the ribose 1,5-bisphosphokinase family.

It catalyses the reaction alpha-D-ribose 1,5-bisphosphate + ATP = 5-phospho-alpha-D-ribose 1-diphosphate + ADP. The protein operates within metabolic intermediate biosynthesis; 5-phospho-alpha-D-ribose 1-diphosphate biosynthesis; 5-phospho-alpha-D-ribose 1-diphosphate from D-ribose 5-phosphate (route II): step 3/3. Its function is as follows. Catalyzes the phosphorylation of ribose 1,5-bisphosphate to 5-phospho-D-ribosyl alpha-1-diphosphate (PRPP). The polypeptide is Ribose 1,5-bisphosphate phosphokinase PhnN (Pseudomonas paraeruginosa (strain DSM 24068 / PA7) (Pseudomonas aeruginosa (strain PA7))).